Reading from the N-terminus, the 380-residue chain is Cytochrome b (380 aa).

Transmembrane regions (helical) follow at residues 34–54 (FGSLLGLCLIAQIATGLFLAM), 78–99 (WLLRNLHANGASFFFICIYFHI), 114–134 (WNIGVILLFLLMATAFVGYVL), and 179–199 (FFTFHFILPFIITAVSLIHLL). Heme b-binding residues include His-84 and His-98. Heme b is bound by residues His-183 and His-197. His-202 contributes to the a ubiquinone binding site. The next 4 helical transmembrane spans lie at 227–247 (YKDLLGFVIMLGALASLSTFA), 289–309 (LGGVLAVVLSIMVLFLMPIIH), 321–341 (IAKTFFWALIANTAILTWIGG), and 348–368 (FITIGQIASGLYFLIFVLLIP).

The protein belongs to the cytochrome b family. The cytochrome bc1 complex contains 3 respiratory subunits (MT-CYB, CYC1 and UQCRFS1), 2 core proteins (UQCRC1 and UQCRC2) and probably 6 low-molecular weight proteins. It depends on heme b as a cofactor.

It localises to the mitochondrion inner membrane. Functionally, component of the ubiquinol-cytochrome c reductase complex (complex III or cytochrome b-c1 complex) that is part of the mitochondrial respiratory chain. The b-c1 complex mediates electron transfer from ubiquinol to cytochrome c. Contributes to the generation of a proton gradient across the mitochondrial membrane that is then used for ATP synthesis. This chain is Cytochrome b (mt-cyb), found in Rana amurensis (Siberian wood frog).